The following is a 339-amino-acid chain: Alpha-ketoglutarate-dependent dioxygenase btcD (339 aa).

Position 96 (His96) interacts with substrate. His140 and Asp142 together coordinate Fe cation. Thr173 is a binding site for 2-oxoglutarate. Positions 207–230 are disordered; sequence DGSDPKFQVPRGSPANVGTNLRPT. A Fe cation-binding site is contributed by His302. Residues Arg314 and Arg318 each coordinate 2-oxoglutarate. Residue Arg318 coordinates substrate.

The protein belongs to the TfdA dioxygenase family. It depends on Fe(2+) as a cofactor.

Its pathway is secondary metabolite biosynthesis; terpenoid biosynthesis. Alpha-ketoglutarate-dependent dioxygenase; part of the gene cluster that mediates the biosynthesis of betaestacins. The bifunctional terpene synthase btcA converts isopentenyl diphosphate (IPP) and dimethylallyl diphosphate (DMAPP) into the sesterterpene betaestacin I. The C-terminal prenyltransferase (PT) domain of btcA catalyzes formation of GFPP, whereas the N-terminal terpene cyclase (TC) domain catalyzes the cyclization of GFPP into betaestacin I. The cytochrome P450 monooxygenase btcB is then responsible for the six-step oxidation of betaestacin I to yield betaestacin II. The roles of the cytochrome P450 monooxygenase btcC and the alpha-ketoglutarate-dependent dioxygenase btcD have not been identified yet. The sequence is that of Alpha-ketoglutarate-dependent dioxygenase btcD from Neocamarosporium betae (Beet black rot fungus).